The primary structure comprises 1370 residues: DNA-directed RNA polymerase subunit beta (1370 aa).

The protein belongs to the RNA polymerase beta chain family. The RNAP catalytic core consists of 2 alpha, 1 beta, 1 beta' and 1 omega subunit. When a sigma factor is associated with the core the holoenzyme is formed, which can initiate transcription.

The enzyme catalyses RNA(n) + a ribonucleoside 5'-triphosphate = RNA(n+1) + diphosphate. Its function is as follows. DNA-dependent RNA polymerase catalyzes the transcription of DNA into RNA using the four ribonucleoside triphosphates as substrates. This is DNA-directed RNA polymerase subunit beta from Geotalea daltonii (strain DSM 22248 / JCM 15807 / FRC-32) (Geobacter daltonii).